We begin with the raw amino-acid sequence, 444 residues long: Phosphoglucosamine mutase (444 aa).

The active-site Phosphoserine intermediate is the Ser-101. Residues Ser-101, Asp-240, Asp-242, and Asp-244 each contribute to the Mg(2+) site. At Ser-101 the chain carries Phosphoserine.

Belongs to the phosphohexose mutase family. Mg(2+) is required as a cofactor. Post-translationally, activated by phosphorylation.

It carries out the reaction alpha-D-glucosamine 1-phosphate = D-glucosamine 6-phosphate. Functionally, catalyzes the conversion of glucosamine-6-phosphate to glucosamine-1-phosphate. This chain is Phosphoglucosamine mutase, found in Aeromonas salmonicida (strain A449).